The chain runs to 248 residues: Granzyme B (248 aa).

The signal sequence occupies residues 1–18 (MKLLLLLLSFSLAPKTEA). Residues 19–20 (GE) constitute a propeptide, activation peptide. Positions 21 to 246 (IIGGHEAKPH…FLSWIKKTMK (226 aa)) constitute a Peptidase S1 domain. Residues C50 and C66 are joined by a disulfide bond. Active-site charge relay system residues include H65 and D109. 2 cysteine pairs are disulfide-bonded: C143-C210 and C174-C189. The active-site Charge relay system is S204.

This sequence belongs to the peptidase S1 family. Granzyme subfamily.

The protein resides in the secreted. It localises to the cytolytic granule. It carries out the reaction Preferential cleavage: -Asp-|-Xaa- &gt;&gt; -Asn-|-Xaa- &gt; -Met-|-Xaa-, -Ser-|-Xaa-.. Its activity is regulated as follows. Inactivated by the serine protease inhibitor diisopropylfluorophosphate. Its function is as follows. Abundant protease in the cytosolic granules of cytotoxic T-cells and NK-cells which activates caspase-independent pyroptosis when delivered into the target cell through the immunological synapse. It cleaves after Asp. Once delivered into the target cell, acts by catalyzing cleavage of gasdermin-E (GSDME), releasing the pore-forming moiety of GSDME, thereby triggering pyroptosis and target cell death. Seems to be linked to an activation cascade of caspases (aspartate-specific cysteine proteases) responsible for apoptosis execution. Cleaves caspase-3 and -9 (CASP3 and CASP9, respectively) to give rise to active enzymes mediating apoptosis. Cleaves and activates CASP7 in response to bacterial infection, promoting plasma membrane repair. In Rattus norvegicus (Rat), this protein is Granzyme B (Gzmb).